We begin with the raw amino-acid sequence, 245 residues long: NLP effector protein Pc118551 (245 aa).

Residues 1 to 19 (MNLRAFLLSAVAALVAVQA) form the signal peptide. A Hepta-peptide GHRHDWE motif motif is present at residues 121 to 127 (QRRHLWE). Residue asparagine 140 is glycosylated (N-linked (GlcNAc...) asparagine).

It belongs to the Necrosis inducing protein (NPP1) family.

The protein resides in the secreted. Secreted effector that contributes strongly to virulence during infection by P.capsici. The polypeptide is NLP effector protein Pc118551 (Phytophthora capsici).